We begin with the raw amino-acid sequence, 327 residues long: Phenylalanine--tRNA ligase alpha subunit (327 aa).

Position 252 (Glu252) interacts with Mg(2+).

The protein belongs to the class-II aminoacyl-tRNA synthetase family. Phe-tRNA synthetase alpha subunit type 1 subfamily. Tetramer of two alpha and two beta subunits. The cofactor is Mg(2+).

It localises to the cytoplasm. It carries out the reaction tRNA(Phe) + L-phenylalanine + ATP = L-phenylalanyl-tRNA(Phe) + AMP + diphosphate + H(+). This is Phenylalanine--tRNA ligase alpha subunit from Cronobacter sakazakii (strain ATCC BAA-894) (Enterobacter sakazakii).